The sequence spans 192 residues: tRNA (pseudouridine(54)-N(1))-methyltransferase (192 aa).

2 residues coordinate S-adenosyl-L-methionine: L114 and G138.

It belongs to the methyltransferase superfamily. TrmY family. As to quaternary structure, homodimer.

The protein resides in the cytoplasm. It catalyses the reaction pseudouridine(54) in tRNA + S-adenosyl-L-methionine = N(1)-methylpseudouridine(54) in tRNA + S-adenosyl-L-homocysteine + H(+). Functionally, specifically catalyzes the N1-methylation of pseudouridine at position 54 (Psi54) in tRNAs. The sequence is that of tRNA (pseudouridine(54)-N(1))-methyltransferase from Aeropyrum pernix (strain ATCC 700893 / DSM 11879 / JCM 9820 / NBRC 100138 / K1).